The sequence spans 508 residues: MLAASLRVEAVAVVAAAVLVLLLSPAAVVVVAGQHDYGDALHKSILFFEGQRSGRLPPDQRLRWRRDSGLHDGAAASVDLTGGYYDAGDNVKFGFPMAFTATLMSWGLIDFGRSFGPHKEEARKAVRWATDYLMKATAKPNTVYVQVGDAFRDHSCWERPEDMDTPRTVYKVDPSHPGSDVAAETAAALAAGSIVFRDADPAYSKRLLDRAIAVFEFADKYRGPYSSSLHDAVCPCYCDFSGYKDELLWGAAWLHKASRRREYREYIKKNEVVLGASESINEFGWDNKHAGINVLISKEVLMGKDEYFQSFRVNADNFMCSLLPGISNHPQIQYSPGGLLFKVGGSNMQHVTSLSFLLLAYSNYLSHAGARVSCGAGGSASPTQLRRVAKRQVDYILGDNPLRMSYMVGYGARFPRRIHHRGSSLPSVAAHPARIGCKGGAAYYASAAPNPNLLVGAVVGGPSDATDAFPDARAVFQQSEPTTYINAPLMGLLAYFSAHPNPAEWADD.

The first 33 residues, 1–33 (MLAASLRVEAVAVVAAAVLVLLLSPAAVVVVAG), serve as a signal peptide directing secretion. Aspartate 89 functions as the Nucleophile in the catalytic mechanism. Catalysis depends on residues histidine 419, aspartate 471, and glutamate 480.

Belongs to the glycosyl hydrolase 9 (cellulase E) family.

It is found in the secreted. It catalyses the reaction Endohydrolysis of (1-&gt;4)-beta-D-glucosidic linkages in cellulose, lichenin and cereal beta-D-glucans.. This Oryza sativa subsp. japonica (Rice) protein is Endoglucanase 6.